The sequence spans 238 residues: Ribonuclease HII (238 aa).

The 193-residue stretch at 23-215 (QRLCGVDEAG…VREALARLPM (193 aa)) folds into the RNase H type-2 domain. A divalent metal cation is bound by residues D29, E30, and D124.

The protein belongs to the RNase HII family. Requires Mn(2+) as cofactor. Mg(2+) is required as a cofactor.

Its subcellular location is the cytoplasm. The enzyme catalyses Endonucleolytic cleavage to 5'-phosphomonoester.. Functionally, endonuclease that specifically degrades the RNA of RNA-DNA hybrids. The chain is Ribonuclease HII from Cupriavidus necator (strain ATCC 17699 / DSM 428 / KCTC 22496 / NCIMB 10442 / H16 / Stanier 337) (Ralstonia eutropha).